The sequence spans 106 residues: Putative membrane protein insertion efficiency factor (106 aa).

Belongs to the UPF0161 family.

The protein localises to the cell inner membrane. Its function is as follows. Could be involved in insertion of integral membrane proteins into the membrane. This is Putative membrane protein insertion efficiency factor from Acinetobacter baumannii (strain SDF).